Here is a 71-residue protein sequence, read N- to C-terminus: Non-structural protein 3x (71 aa).

The polypeptide is Non-structural protein 3x (Feline coronavirus (strain FIPV WSU-79/1146) (FCoV)).